The chain runs to 127 residues: Apolipoprotein C-IV (127 aa).

The signal sequence occupies residues Met1–Cys27.

Belongs to the apolipoprotein C4 family.

The protein resides in the secreted. In terms of biological role, may participate in lipoprotein metabolism. The chain is Apolipoprotein C-IV (APOC4) from Papio hamadryas (Hamadryas baboon).